The following is a 522-amino-acid chain: Cytochrome bd-I ubiquinol oxidase subunit 1 (522 aa).

N-formylmethionine is present on M1. Topologically, residues 1–22 (MLDIVELSRLQFALTAMYHFLF) are cytoplasmic. H19 serves as a coordination point for heme b. Residues 23–42 (VPLTLGMAFLLAIMETVYVL) traverse the membrane as a helical segment. Residues 43–94 (SGKQIYKDMTKFWGKLFGINFALGVATGLTMEFQFGTNWSYYSHYVGDIFGA) are Periplasmic-facing. The helical transmembrane segment at 95 to 114 (PLAIEGLMAFFLESTFVGLF) threads the bilayer. Over 115–129 (FFGWDRLGKVQHMCV) the chain is Cytoplasmic. Residues 130–149 (TWLVALGSNLSALWILVANG) form a helical membrane-spanning segment. At 150–187 (WMQNPIASDFNFETMRMEMVSFSELVLNPVAQVKFVHT) the chain is on the periplasmic side. A heme b-binding site is contributed by H186. The helical transmembrane segment at 188-207 (VASGYVTGAMFILGISAWYM) threads the bilayer. Over 208–219 (LKGRDFAFAKRS) the chain is Cytoplasmic. Residues 220–239 (FAIAASFGMAAVLSVIVLGD) traverse the membrane as a helical segment. Residues 240-392 (ESGYEMGDVQ…VAPLYFAFRI (153 aa)) are Periplasmic-facing. Residue M393 coordinates heme b. Residues 393–412 (MVACGFLLLAIIALSFWSVI) traverse the membrane as a helical segment. Residues 413–470 (RNRIGEKKWLLRAALYGIPLPWIAVEAGWFVAEYGRQPWAIGEVLPTAVANSSLTAGD) lie on the Cytoplasmic side of the membrane. The chain crosses the membrane as a helical span at residues 471-490 (LIFSMVLICGLYTLFLVAEL). Over 491–522 (FLMFKFARLGPSSLKTGRYHFEQSSTTTQPAR) the chain is Periplasmic.

Belongs to the cytochrome ubiquinol oxidase subunit 1 family. In terms of assembly, heterodimer of subunits I and II. The cofactor is heme b. Requires heme d cis-diol as cofactor.

The protein localises to the cell inner membrane. The enzyme catalyses 2 a ubiquinol + O2(in) + 4 H(+)(in) = 2 a ubiquinone + 2 H2O(in) + 4 H(+)(out). The protein operates within energy metabolism; oxidative phosphorylation. Its function is as follows. A terminal oxidase that produces a proton motive force by the vectorial transfer of protons across the inner membrane. It is the component of the aerobic respiratory chain of E.coli that predominates when cells are grown at low aeration. Generates a proton motive force using protons and electrons from opposite sides of the membrane to generate H(2)O, transferring 1 proton/electron. The protein is Cytochrome bd-I ubiquinol oxidase subunit 1 (cydA) of Escherichia coli O6:H1 (strain CFT073 / ATCC 700928 / UPEC).